We begin with the raw amino-acid sequence, 469 residues long: Protein HEAT STRESS TOLERANT DWD 1 (469 aa).

A compositionally biased stretch (basic residues) spans 1-15 (MGRNVKTKAKRKNKK). Disordered regions lie at residues 1 to 29 (MGRN…SIPT) and 115 to 150 (DVVP…KTPN). A compositionally biased stretch (acidic residues) spans 124-143 (GEDEDEDDEDDSDSDDDDGD). WD repeat units follow at residues 157–197 (AHHG…NALA), 221–261 (GHKD…WAVD), 267–307 (GHTA…SPAL), 311–351 (AHNA…GGDA), 358–398 (YHKH…DEEE), and 425–464 (QGQK…NTLP).

Belongs to the WD repeat RBAP46/RBAP48/MSI1 family. As to quaternary structure, probable component of CULLIN4 (CUL4) RING ligase (CRL4) complexes. Interacts with DDB1A and DDB1B. Associates with HSP90-1.

It participates in protein modification; protein ubiquitination. Its function is as follows. Probable substrate receptor of CRL4 E3 ligase complexes acting as negative regulators of thermotolerance by disturbing the action of HSP90-1 and by preventing the expression of heat-inducible genes (e.g. HSP14.7, HSP21, At2g03020 and WRKY28). In Arabidopsis thaliana (Mouse-ear cress), this protein is Protein HEAT STRESS TOLERANT DWD 1.